Reading from the N-terminus, the 382-residue chain is Polyadenylate-binding protein 5 (382 aa).

4 RRM domains span residues 18–96, 106–182, 199–276, and 302–378; these read AALY…WSQP, GNIF…RFKF, TNVF…RAQK, and VPIY…LGQA.

The protein resides in the cytoplasm. Functionally, binds the poly(A) tail of mRNA. May be involved in cytoplasmic regulatory processes of mRNA metabolism. Can probably bind to cytoplasmic RNA sequences other than poly(A) in vivo. In Gorilla gorilla gorilla (Western lowland gorilla), this protein is Polyadenylate-binding protein 5 (PABPC5).